We begin with the raw amino-acid sequence, 345 residues long: Uroporphyrinogen decarboxylase (345 aa).

Substrate-binding positions include 26 to 30 (RQAGR), Phe-45, Asp-75, Tyr-151, Ser-206, and His-320.

Belongs to the uroporphyrinogen decarboxylase family. In terms of assembly, homodimer.

The protein resides in the cytoplasm. The enzyme catalyses uroporphyrinogen III + 4 H(+) = coproporphyrinogen III + 4 CO2. The protein operates within porphyrin-containing compound metabolism; protoporphyrin-IX biosynthesis; coproporphyrinogen-III from 5-aminolevulinate: step 4/4. Functionally, catalyzes the decarboxylation of four acetate groups of uroporphyrinogen-III to yield coproporphyrinogen-III. The protein is Uroporphyrinogen decarboxylase of Staphylococcus carnosus (strain TM300).